Here is a 302-residue protein sequence, read N- to C-terminus: Sulfate adenylyltransferase subunit 2 (302 aa).

Belongs to the PAPS reductase family. CysD subfamily. Heterodimer composed of CysD, the smaller subunit, and CysN.

It carries out the reaction sulfate + ATP + H(+) = adenosine 5'-phosphosulfate + diphosphate. It functions in the pathway sulfur metabolism; hydrogen sulfide biosynthesis; sulfite from sulfate: step 1/3. In terms of biological role, with CysN forms the ATP sulfurylase (ATPS) that catalyzes the adenylation of sulfate producing adenosine 5'-phosphosulfate (APS) and diphosphate, the first enzymatic step in sulfur assimilation pathway. APS synthesis involves the formation of a high-energy phosphoric-sulfuric acid anhydride bond driven by GTP hydrolysis by CysN coupled to ATP hydrolysis by CysD. In Erwinia tasmaniensis (strain DSM 17950 / CFBP 7177 / CIP 109463 / NCPPB 4357 / Et1/99), this protein is Sulfate adenylyltransferase subunit 2.